We begin with the raw amino-acid sequence, 501 residues long: ATP synthase subunit alpha (501 aa).

An ATP-binding site is contributed by 169 to 176; it reads GDRQTGKT.

Belongs to the ATPase alpha/beta chains family. F-type ATPases have 2 components, CF(1) - the catalytic core - and CF(0) - the membrane proton channel. CF(1) has five subunits: alpha(3), beta(3), gamma(1), delta(1), epsilon(1). CF(0) has three main subunits: a(1), b(2) and c(9-12). The alpha and beta chains form an alternating ring which encloses part of the gamma chain. CF(1) is attached to CF(0) by a central stalk formed by the gamma and epsilon chains, while a peripheral stalk is formed by the delta and b chains.

Its subcellular location is the cell membrane. It carries out the reaction ATP + H2O + 4 H(+)(in) = ADP + phosphate + 5 H(+)(out). Functionally, produces ATP from ADP in the presence of a proton gradient across the membrane. The alpha chain is a regulatory subunit. The polypeptide is ATP synthase subunit alpha (Streptococcus pneumoniae serotype 2 (strain D39 / NCTC 7466)).